The primary structure comprises 264 residues: Acyl-[acyl-carrier-protein]--UDP-N-acetylglucosamine O-acyltransferase (264 aa).

It belongs to the transferase hexapeptide repeat family. LpxA subfamily. As to quaternary structure, homotrimer.

The protein resides in the cytoplasm. It catalyses the reaction a (3R)-hydroxyacyl-[ACP] + UDP-N-acetyl-alpha-D-glucosamine = a UDP-3-O-[(3R)-3-hydroxyacyl]-N-acetyl-alpha-D-glucosamine + holo-[ACP]. Its pathway is glycolipid biosynthesis; lipid IV(A) biosynthesis; lipid IV(A) from (3R)-3-hydroxytetradecanoyl-[acyl-carrier-protein] and UDP-N-acetyl-alpha-D-glucosamine: step 1/6. Involved in the biosynthesis of lipid A, a phosphorylated glycolipid that anchors the lipopolysaccharide to the outer membrane of the cell. This chain is Acyl-[acyl-carrier-protein]--UDP-N-acetylglucosamine O-acyltransferase, found in Rickettsia prowazekii (strain Madrid E).